The primary structure comprises 124 residues: MARLMGVDLPRDKRMEIALTYIYGVGRTRSQEILEATGISRDQRTKDLTDDQVSQLRDYIEGNLKVEGDLRREVQADIRRKIEIGCYQGLRHRRGLPVRGQRTKTNARTRKGPKRTIAGKKKAR.

Positions 97–124 are disordered; it reads PVRGQRTKTNARTRKGPKRTIAGKKKAR.

Belongs to the universal ribosomal protein uS13 family. Part of the 30S ribosomal subunit. Forms a loose heterodimer with protein S19. Forms two bridges to the 50S subunit in the 70S ribosome.

In terms of biological role, located at the top of the head of the 30S subunit, it contacts several helices of the 16S rRNA. In the 70S ribosome it contacts the 23S rRNA (bridge B1a) and protein L5 of the 50S subunit (bridge B1b), connecting the 2 subunits; these bridges are implicated in subunit movement. Contacts the tRNAs in the A and P-sites. The chain is Small ribosomal subunit protein uS13 from Mycolicibacterium gilvum (strain PYR-GCK) (Mycobacterium gilvum (strain PYR-GCK)).